Here is a 1273-residue protein sequence, read N- to C-terminus: Inverted formin-2 (1273 aa).

Disordered regions lie at residues 1–30 (MSVK…EANL), 346–387 (GRPR…GQQP), 427–559 (LSSS…PLPG), 960–999 (NKDR…GPGK), and 1021–1273 (KTAR…CVIQ). The residue at position 2 (Ser-2) is an N-acetylserine. Positions 2–330 (SVKEGAQRKW…RAVLLASDAQ (329 aa)) constitute a GBD/FH3 domain. At Ser-351 the chain carries Phosphoserine. Residues 359 to 382 (SVQTNSVQNQGSSSQNTTTPTTKV) are compositionally biased toward low complexity. The FH1 domain occupies 421–564 (PLPTPPLSSS…PPLPGFSVPS (144 aa)). Composition is skewed to pro residues over residues 433–516 (VLPP…PLPS) and 524–558 (QPPP…PPLP). The FH2 domain maps to 589–979 (HRRVNPPTLR…AERRKQQLAE (391 aa)). Residues 907–984 (EASQELDKVF…QQLAEEEARR (78 aa)) adopt a coiled-coil conformation. A WH2 domain is found at 1007–1022 (DALLADIRKGFQLRKT). Polar residues predominate over residues 1047–1059 (ATASNPTQGTNHP). A compositionally biased stretch (basic and acidic residues) spans 1088–1101 (SKEEDGPPALERRS). Ser-1172 and Ser-1174 each carry phosphoserine. Over residues 1195–1204 (GEDEDGEDTA) the composition is skewed to acidic residues. Phosphothreonine is present on Thr-1203. Phosphoserine is present on residues Ser-1216 and Ser-1218. Residues Thr-1223 and Thr-1230 each carry the phosphothreonine modification. The span at 1242–1251 (TSKRRKKRPS) shows a compositional bias: basic residues.

The protein belongs to the formin homology family. As to quaternary structure, interacts with profilin and actin at the FH1 and FH2 domains respectively. Interacts with DAAM2.

It localises to the cytoplasm. Its subcellular location is the perinuclear region. With respect to regulation, phosphate inhibits both the depolymerization and severing activities. Functionally, severs actin filaments and accelerates their polymerization and depolymerization. In Mus musculus (Mouse), this protein is Inverted formin-2 (Inf2).